The primary structure comprises 385 residues: MVFDLKRIVRPKIYNLEPYRCARDDFTEGILLDANENAHGPTPVELSKTNLHRYPDPHQLEFKTAMTKYRNKTSSYANDPEVKPLTADNLCLGVGSDESIDAIIRACCVPGKEKILVLPPTYSMYSVCANINDIEVVQCPLTVSDGSFQMDTEAVLTILKNDSLIKLMFVTSPGNPTGAKIKTSLIEKVLQNWDNGLVVVDEAYVDFCGGSTAPLVTKYPNLVTLQTLSKSFGLAGIRLGMTYATAELARILNAMKAPYNISSLASEYALKAVQDSNLKKMEATSKIINEEKMRLLKELTALDYVDDQYVGGLDANFLLIRINGGDNVLAKKLYYQLATQSGVVVRFRGNELGCSGCLRITVGTHEENTHLIKYFKETLYKLANE.

The residue at position 230 (lysine 230) is an N6-(pyridoxal phosphate)lysine.

Belongs to the class-II pyridoxal-phosphate-dependent aminotransferase family. Pyridoxal 5'-phosphate serves as cofactor.

It catalyses the reaction L-histidinol phosphate + 2-oxoglutarate = 3-(imidazol-4-yl)-2-oxopropyl phosphate + L-glutamate. The protein operates within amino-acid biosynthesis; L-histidine biosynthesis; L-histidine from 5-phospho-alpha-D-ribose 1-diphosphate: step 7/9. The chain is Histidinol-phosphate aminotransferase from Saccharomyces cerevisiae (strain ATCC 204508 / S288c) (Baker's yeast).